The sequence spans 132 residues: Small ribosomal subunit protein uS8 (132 aa).

The protein belongs to the universal ribosomal protein uS8 family. In terms of assembly, part of the 30S ribosomal subunit. Contacts proteins S5 and S12.

In terms of biological role, one of the primary rRNA binding proteins, it binds directly to 16S rRNA central domain where it helps coordinate assembly of the platform of the 30S subunit. This Mycobacterium sp. (strain KMS) protein is Small ribosomal subunit protein uS8.